The primary structure comprises 249 residues: 5'-nucleotidase SurE (249 aa).

Residues aspartate 8, aspartate 9, serine 39, and asparagine 91 each coordinate a divalent metal cation.

This sequence belongs to the SurE nucleotidase family. Requires a divalent metal cation as cofactor.

The protein resides in the cytoplasm. It catalyses the reaction a ribonucleoside 5'-phosphate + H2O = a ribonucleoside + phosphate. Nucleotidase that shows phosphatase activity on nucleoside 5'-monophosphates. The polypeptide is 5'-nucleotidase SurE (Stutzerimonas stutzeri (strain A1501) (Pseudomonas stutzeri)).